A 92-amino-acid polypeptide reads, in one-letter code: DNA/RNA-binding protein Alba (92 aa).

N6-acetyllysine is present on Lys11.

This sequence belongs to the histone-like Alba family. In terms of processing, acetylated. Acetylation at Lys-11 decreases DNA-binding affinity.

The protein localises to the cytoplasm. It localises to the chromosome. Its function is as follows. Binds double-stranded DNA tightly but without sequence specificity. Involved in DNA compaction. This is DNA/RNA-binding protein Alba from Pyrobaculum neutrophilum (strain DSM 2338 / JCM 9278 / NBRC 100436 / V24Sta) (Thermoproteus neutrophilus).